The primary structure comprises 212 residues: HTH-type transcriptional repressor NicS (212 aa).

Positions 14-74 constitute an HTH tetR-type domain; sequence DRTRDNILKA…SVLEHIYASF (61 aa). The segment at residues 37-56 is a DNA-binding region (H-T-H motif); the sequence is RIEQISTLAKSNDRMIYYYF.

It participates in cofactor degradation; nicotinate degradation [regulation]. Its function is as follows. Transcriptional repressor for the nicAB operon, encoding the upper aerobic nicotinate degradation pathway. Acts under non-induced conditions: repression of the nicAB operon becomes alleviated in presence of either nicotinate or 6-hydroxynicotinate (6HNA). This Pseudomonas putida (strain ATCC 47054 / DSM 6125 / CFBP 8728 / NCIMB 11950 / KT2440) protein is HTH-type transcriptional repressor NicS (nicS).